The primary structure comprises 169 residues: Oleosin Ara h 10.0101 (169 aa).

A run of 2 helical transmembrane segments spans residues 39–59 and 73–93; these read VIAV…AGLA and LFIL…LSVA. The span at 146–156 shows a compositional bias: basic and acidic residues; sequence KDVGQKTKEVG. Positions 146-169 are disordered; the sequence is KDVGQKTKEVGQEIQTKAQDSKRT.

This sequence belongs to the oleosin family. In terms of tissue distribution, expressed in seeds (at protein level).

The protein localises to the lipid droplet. It is found in the membrane. In terms of biological role, may have a structural role to stabilize the lipid body during desiccation of the seed by preventing coalescence of the oil. Probably interacts with both lipid and phospholipid moieties of lipid bodies. May also provide recognition signals for specific lipase anchorage in lipolysis during seedling growth. In Arachis hypogaea (Peanut), this protein is Oleosin Ara h 10.0101.